The following is a 236-amino-acid chain: Large ribosomal subunit protein uL1 (236 aa).

This sequence belongs to the universal ribosomal protein uL1 family. As to quaternary structure, part of the 50S ribosomal subunit.

Binds directly to 23S rRNA. The L1 stalk is quite mobile in the ribosome, and is involved in E site tRNA release. Functionally, protein L1 is also a translational repressor protein, it controls the translation of the L11 operon by binding to its mRNA. The chain is Large ribosomal subunit protein uL1 from Protochlamydia amoebophila (strain UWE25).